We begin with the raw amino-acid sequence, 234 residues long: Zinc finger FYVE domain-containing protein 21 (234 aa).

Residues 44–104 (DKECPRCMQC…QCADCALVSH (61 aa)) form an FYVE-type zinc finger. Residues cysteine 50, cysteine 53, cysteine 66, cysteine 69, cysteine 74, cysteine 77, cysteine 96, and cysteine 99 each coordinate Zn(2+). Positions 107 to 234 (AEFYDKQLKV…TKLLYESRDQ (128 aa)) are PH-like.

As to quaternary structure, interacts with PTK2/FAK1.

The protein localises to the cell junction. It is found in the focal adhesion. The protein resides in the cytoplasmic vesicle. Its subcellular location is the endosome. Its function is as follows. Plays a role in cell adhesion, and thereby in cell motility which requires repeated formation and disassembly of focal adhesions. Regulates microtubule-induced PTK2/FAK1 dephosphorylation, an event important for focal adhesion disassembly, as well as integrin beta-1/ITGB1 cell surface expression. In Rattus norvegicus (Rat), this protein is Zinc finger FYVE domain-containing protein 21 (Zfyve21).